Here is a 238-residue protein sequence, read N- to C-terminus: Putative type I specificity subunit S.MpnORF201P (238 aa).

This sequence belongs to the type-I restriction system S methylase family. In terms of assembly, the methyltransferase is composed of M and S polypeptides.

The specificity (S) subunit of a type I methyltransferase (MTase); this subunit dictates DNA sequence specificity. The single R subunit has multiple frameshifts and is probably not expressed. The protein is Putative type I specificity subunit S.MpnORF201P of Mycoplasma pneumoniae (strain ATCC 29342 / M129 / Subtype 1) (Mycoplasmoides pneumoniae).